A 364-amino-acid chain; its full sequence is Long-wave-sensitive opsin 1 (364 aa).

Topologically, residues 1–52 are extracellular; sequence MAHTWGPQRLAGGQPQANFEESTQGSIFTYTNSNSTRDPFEGPNYHIAPRWV. O-linked (GlcNAc) serine glycosylation is present at Ser-22. N-linked (GlcNAc...) asparagine glycosylation occurs at Asn-34. Residues 53–77 form a helical membrane-spanning segment; it reads YHLTSAWMVFVVIASVFTNGLVLAA. Topologically, residues 78–89 are cytoplasmic; that stretch reads TMRFKKLRHPLN. The helical transmembrane segment at 90-115 threads the bilayer; that stretch reads WILVNLAIADLAETIIASTISVVNQM. The Extracellular segment spans residues 116 to 129; it reads YGYFVLGHPLCVVE. Cys-126 and Cys-203 form a disulfide bridge. The helical transmembrane segment at 130–149 threads the bilayer; the sequence is GYTVSLCGITGLWSLAIISW. Residues 150–168 lie on the Cytoplasmic side of the membrane; sequence ERWMVVCKPFGNVRFDAKL. A helical transmembrane segment spans residues 169–192; the sequence is ATAGIAFSWIWAAVWTAPPIFGWS. The Extracellular portion of the chain corresponds to 193 to 218; that stretch reads RYWPHGLKTSCGPDVFSGSSYPGVQS. The helical transmembrane segment at 219-246 threads the bilayer; that stretch reads YMIVLMITCCFIPLSVIILCYLQVWLAI. Residues 247–268 lie on the Cytoplasmic side of the membrane; it reads RAVAKQQKESESTQKAEKEVTR. A helical transmembrane segment spans residues 269–292; the sequence is MVMVMIFAYCLCWGPYTFFACFAA. Residues 293 to 300 are Extracellular-facing; sequence AHPGYAFH. The helical transmembrane segment at 301–325 threads the bilayer; it reads PLVAALPAYFAKSATIYNPIIYVFM. Lys-312 bears the N6-(retinylidene)lysine mark. Over 326–364 the chain is Cytoplasmic; the sequence is NRQFRNCILQLFGKKVDDSSELSSVSKTEASSVSSVSPA.

It belongs to the G-protein coupled receptor 1 family. Opsin subfamily. Phosphorylated on some or all of the serine and threonine residues present in the C-terminal region. As to expression, the three color pigments are found in the cone photoreceptor cells.

Its subcellular location is the membrane. Visual pigments are the light-absorbing molecules that mediate vision. They consist of an apoprotein, opsin, covalently linked to cis-retinal. This chain is Long-wave-sensitive opsin 1 (OPN1LW), found in Capra hircus (Goat).